The chain runs to 204 residues: Phosphatidylserine decarboxylase proenzyme (204 aa).

Catalysis depends on Ser-169, which acts as the Schiff-base intermediate with substrate; via pyruvic acid. Residue Ser-169 is modified to Pyruvic acid (Ser); by autocatalysis.

It belongs to the phosphatidylserine decarboxylase family. PSD-A subfamily. Heterodimer of a large membrane-associated beta subunit and a small pyruvoyl-containing alpha subunit. Requires pyruvate as cofactor. In terms of processing, is synthesized initially as an inactive proenzyme. Formation of the active enzyme involves a self-maturation process in which the active site pyruvoyl group is generated from an internal serine residue via an autocatalytic post-translational modification. Two non-identical subunits are generated from the proenzyme in this reaction, and the pyruvate is formed at the N-terminus of the alpha chain, which is derived from the carboxyl end of the proenzyme. The post-translation cleavage follows an unusual pathway, termed non-hydrolytic serinolysis, in which the side chain hydroxyl group of the serine supplies its oxygen atom to form the C-terminus of the beta chain, while the remainder of the serine residue undergoes an oxidative deamination to produce ammonia and the pyruvoyl prosthetic group on the alpha chain.

The protein localises to the cell membrane. The catalysed reaction is a 1,2-diacyl-sn-glycero-3-phospho-L-serine + H(+) = a 1,2-diacyl-sn-glycero-3-phosphoethanolamine + CO2. It functions in the pathway phospholipid metabolism; phosphatidylethanolamine biosynthesis; phosphatidylethanolamine from CDP-diacylglycerol: step 2/2. In terms of biological role, catalyzes the formation of phosphatidylethanolamine (PtdEtn) from phosphatidylserine (PtdSer). This is Phosphatidylserine decarboxylase proenzyme from Solibacter usitatus (strain Ellin6076).